A 240-amino-acid chain; its full sequence is Ribonuclease PH (240 aa).

Residues arginine 87 and 125–127 (GTR) contribute to the phosphate site.

The protein belongs to the RNase PH family. Homohexameric ring arranged as a trimer of dimers.

The catalysed reaction is tRNA(n+1) + phosphate = tRNA(n) + a ribonucleoside 5'-diphosphate. Phosphorolytic 3'-5' exoribonuclease that plays an important role in tRNA 3'-end maturation. Removes nucleotide residues following the 3'-CCA terminus of tRNAs; can also add nucleotides to the ends of RNA molecules by using nucleoside diphosphates as substrates, but this may not be physiologically important. Probably plays a role in initiation of 16S rRNA degradation (leading to ribosome degradation) during starvation. The chain is Ribonuclease PH from Ruminiclostridium cellulolyticum (strain ATCC 35319 / DSM 5812 / JCM 6584 / H10) (Clostridium cellulolyticum).